The sequence spans 378 residues: tRNA (guanine(26)-N(2))-dimethyltransferase (378 aa).

Positions 4–374 (KEVTEGKVRI…KEYEEITKCI (371 aa)) constitute a Trm1 methyltransferase domain. 5 residues coordinate S-adenosyl-L-methionine: Arg-44, Arg-69, Asp-87, Asp-114, and Ala-115. Cys-246, Cys-249, Cys-263, and Cys-266 together coordinate Zn(2+).

Belongs to the class I-like SAM-binding methyltransferase superfamily. Trm1 family.

It carries out the reaction guanosine(26) in tRNA + 2 S-adenosyl-L-methionine = N(2)-dimethylguanosine(26) in tRNA + 2 S-adenosyl-L-homocysteine + 2 H(+). In terms of biological role, dimethylates a single guanine residue at position 26 of a number of tRNAs using S-adenosyl-L-methionine as donor of the methyl groups. The polypeptide is tRNA (guanine(26)-N(2))-dimethyltransferase (Saccharolobus solfataricus (strain ATCC 35092 / DSM 1617 / JCM 11322 / P2) (Sulfolobus solfataricus)).